Consider the following 284-residue polypeptide: MEMO1 family protein SSO0066 (284 aa).

It belongs to the MEMO1 family.

The protein is MEMO1 family protein SSO0066 of Saccharolobus solfataricus (strain ATCC 35092 / DSM 1617 / JCM 11322 / P2) (Sulfolobus solfataricus).